A 178-amino-acid chain; its full sequence is MAAELLEQPVLGSRRLSNILVALMVTIGGIGFLFASLSSYLGRDLLPLGHPAGLVFVPQGLIMGLYSLAAALLASYLWAVITINVGSGSNRFDRSAGVVTISRRGFRQPISVEIPIKDIQAVKVEVRDGFNTRRRVSLRVRGRRDMPLTRVGEPLPLAQLEQDGAELARFLGVNLEGL.

2 helical membrane-spanning segments follow: residues isoleucine 19–serine 39 and leucine 61–isoleucine 81.

It belongs to the Ycf4 family.

The protein localises to the cellular thylakoid membrane. Functionally, seems to be required for the assembly of the photosystem I complex. The polypeptide is Photosystem I assembly protein Ycf4 (Synechococcus sp. (strain CC9311)).